A 476-amino-acid chain; its full sequence is tRNA-2-methylthio-N(6)-dimethylallyladenosine synthase (476 aa).

Residues 1–14 (MTEVVHLHMPEEAR) show a composition bias toward basic and acidic residues. The segment at 1 to 20 (MTEVVHLHMPEEARATQSRD) is disordered. The region spanning 26 to 147 (RRYYVWTVGC…APNPIYQLEE (122 aa)) is the MTTase N-terminal domain. [4Fe-4S] cluster is bound by residues cysteine 35, cysteine 71, cysteine 105, cysteine 170, cysteine 174, and cysteine 177. Positions 156–390 (DHPPVSVHVP…ERLQEQIAAE (235 aa)) constitute a Radical SAM core domain. The TRAM domain maps to 393–453 (ARFLHQTVEV…PWSLQGVLAR (61 aa)).

The protein belongs to the methylthiotransferase family. MiaB subfamily. In terms of assembly, monomer. It depends on [4Fe-4S] cluster as a cofactor.

It localises to the cytoplasm. It carries out the reaction N(6)-dimethylallyladenosine(37) in tRNA + (sulfur carrier)-SH + AH2 + 2 S-adenosyl-L-methionine = 2-methylsulfanyl-N(6)-dimethylallyladenosine(37) in tRNA + (sulfur carrier)-H + 5'-deoxyadenosine + L-methionine + A + S-adenosyl-L-homocysteine + 2 H(+). Functionally, catalyzes the methylthiolation of N6-(dimethylallyl)adenosine (i(6)A), leading to the formation of 2-methylthio-N6-(dimethylallyl)adenosine (ms(2)i(6)A) at position 37 in tRNAs that read codons beginning with uridine. The chain is tRNA-2-methylthio-N(6)-dimethylallyladenosine synthase from Roseiflexus sp. (strain RS-1).